We begin with the raw amino-acid sequence, 139 residues long: Large ribosomal subunit protein uL16 (139 aa).

It belongs to the universal ribosomal protein uL16 family. In terms of assembly, part of the 50S ribosomal subunit.

Binds 23S rRNA and is also seen to make contacts with the A and possibly P site tRNAs. This Gloeothece citriformis (strain PCC 7424) (Cyanothece sp. (strain PCC 7424)) protein is Large ribosomal subunit protein uL16.